Here is a 444-residue protein sequence, read N- to C-terminus: Chitinase-like protein Idgf1 (444 aa).

The first 20 residues, 1 to 20, serve as a signal peptide directing secretion; the sequence is MTSLLFVILNIILTLHLCAG. One can recognise a GH18 domain in the interval 29–444; the sequence is KRLICYYDAQ…PILRSVRGHL (416 aa). A disulfide bridge links Cys33 with Cys60. 3 N-linked (GlcNAc...) asparagine glycosylation sites follow: Asn213, Asn225, and Asn335. Cys346 and Cys429 are joined by a disulfide.

Belongs to the glycosyl hydrolase 18 family. IDGF subfamily. Glycosylated.

The protein localises to the secreted. Functionally, cooperates with insulin-like peptides to stimulate the proliferation, polarization and motility of imaginal disk cells. May act by stabilizing the binding of insulin-like peptides to its receptor through a simultaneous interaction with both molecules to form a multiprotein signaling complex. The protein is Chitinase-like protein Idgf1 (Idgf1) of Glossina morsitans morsitans (Savannah tsetse fly).